The following is a 117-amino-acid chain: Ig heavy chain V region 1-72 (117 aa).

The first 19 residues, Met1–Ser19, serve as a signal peptide directing secretion. The interval Gln20–Thr49 is framework-1. Cys41 and Cys115 are oxidised to a cystine. The segment at Ser50–His54 is complementarity-determining-1. Positions Trp55–Gly68 are framework-2. The complementarity-determining-2 stretch occupies residues Arg69–Ser85. Positions Lys86 to Arg117 are framework-3.

This chain is Ig heavy chain V region 1-72, found in Mus musculus (Mouse).